A 419-amino-acid chain; its full sequence is MKSKRQALSPLQLMEQTYDVVNFHPGGAEIIENYQGRDATDAFMVMHFQEAFDKLKRMPKINPSFELPPQAAVNEAQEDFRKLREELIATGMFDASPLWYSYKISTTLGLGVLGYFLMVQYQMYFIGAVLLGMHYQQMGWLSHDICHHQTFKNRNWNNLVGLVFGNGLQGFSVTCWKDRHNAHHSATNVQGHDPDIDNLPPLAWSEDDVTRASPISRKLIQFQQYYFLVICILLRFIWCFQCVLTVRSLKDRDNQFYRSQYKKEAIGLALHWTLKALFHLFFMPSILTSLLVFFVSELVGGFGIAIVVFMNHYPLEKIGDPVWDGHGFSVGQIHETMNIRRGIITDWFFGGLNYQIEHHLWPTLPRHNLTAVSYQVEQLCQKHNLPYRNPLPHEGLVILLRYLAVFARMAEKQPAGKAL.

Residues 1–64 (MKSKRQALSP…LKRMPKINPS (64 aa)) form the Cytochrome b5 heme-binding domain. 2 residues coordinate heme: H24 and H47. A helical membrane pass occupies residues 110–130 (LGVLGYFLMVQYQMYFIGAVL). The Histidine box-1 motif lies at 143–147 (HDICH). Residues 156 to 176 (WNNLVGLVFGNGLQGFSVTCW) traverse the membrane as a helical segment. Positions 180–184 (HNAHH) match the Histidine box-2 motif. Helical transmembrane passes span 226 to 246 (YFLV…VLTV), 266 to 286 (IGLA…MPSI), and 290 to 310 (LLVF…VVFM). Residues 355–359 (QIEHH) carry the Histidine box-3 motif.

Belongs to the fatty acid desaturase type 1 family. The cofactor is Fe cation.

It localises to the membrane. The catalysed reaction is an (11Z,14Z)-icosadienoyl-containing glycerolipid + 2 Fe(II)-[cytochrome b5] + O2 + 2 H(+) = an (8Z,11Z,14Z)-icosatrienoyl-containing glycerolipid + 2 Fe(III)-[cytochrome b5] + 2 H2O. It carries out the reaction an (11Z,14Z,17Z)-icosatrienoyl-containing glycerolipid + 2 Fe(II)-[cytochrome b5] + O2 + 2 H(+) = an (8Z,11Z,14Z,17Z)-eicosatetraenoyl-containing glycerolipid + 2 Fe(III)-[cytochrome b5] + 2 H2O. It catalyses the reaction an (11Z)-eicosenoyl-containing glycerolipid + 2 Fe(II)-[cytochrome b5] + O2 + 2 H(+) = a (8Z,11Z)-eicosadienoyl-containing glycerolipid + 2 Fe(III)-[cytochrome b5] + 2 H2O. The protein operates within lipid metabolism; fatty acid metabolism. Its function is as follows. Delta(8)-fatty-acid desaturase which introduces a double bond at the 8-position in 20-carbon chain length fatty acids (C20) that have an existing delta-11 unsaturation (double bond). Whether it acts on CoA-linked substrates (as in animals) or phospholipid-linked substrates (as in plants and fungi) is still not clear. In Euglena gracilis, this protein is Delta(8)-fatty-acid desaturase (efd1).